A 286-amino-acid polypeptide reads, in one-letter code: 33 kDa chaperonin (286 aa).

Intrachain disulfides connect Cys225–Cys227 and Cys258–Cys261.

Belongs to the HSP33 family. Under oxidizing conditions two disulfide bonds are formed involving the reactive cysteines. Under reducing conditions zinc is bound to the reactive cysteines and the protein is inactive.

Its subcellular location is the cytoplasm. In terms of biological role, redox regulated molecular chaperone. Protects both thermally unfolding and oxidatively damaged proteins from irreversible aggregation. Plays an important role in the bacterial defense system toward oxidative stress. This Shewanella putrefaciens (strain CN-32 / ATCC BAA-453) protein is 33 kDa chaperonin.